A 741-amino-acid chain; its full sequence is NAD(P)H-quinone oxidoreductase subunit 5, chloroplastic (741 aa).

A run of 16 helical transmembrane segments spans residues 9-29 (WIIP…LLLF), 40-60 (WAFQ…NLSI), 89-109 (IDPL…LVLI), 125-145 (FAYM…SNLI), 147-167 (IYIF…FWFT), 185-205 (GDFG…SFEF), 219-239 (NQVN…GAIA), 258-278 (TPIS…FLVA), 289-311 (HIMN…LALA), 327-347 (LGYM…FHLI), 354-374 (ALLF…VGYC), 396-416 (NSFL…CFWS), 425-445 (WLYS…TAFY), 549-569 (LFPI…GIPL), 605-625 (LFSV…YKPV), and 721-741 (YLFF…FLNL).

This sequence belongs to the complex I subunit 5 family. NDH is composed of at least 16 different subunits, 5 of which are encoded in the nucleus.

It is found in the plastid. It localises to the chloroplast thylakoid membrane. The catalysed reaction is a plastoquinone + NADH + (n+1) H(+)(in) = a plastoquinol + NAD(+) + n H(+)(out). It catalyses the reaction a plastoquinone + NADPH + (n+1) H(+)(in) = a plastoquinol + NADP(+) + n H(+)(out). Its function is as follows. NDH shuttles electrons from NAD(P)H:plastoquinone, via FMN and iron-sulfur (Fe-S) centers, to quinones in the photosynthetic chain and possibly in a chloroplast respiratory chain. The immediate electron acceptor for the enzyme in this species is believed to be plastoquinone. Couples the redox reaction to proton translocation, and thus conserves the redox energy in a proton gradient. This chain is NAD(P)H-quinone oxidoreductase subunit 5, chloroplastic (ndhF), found in Symphyotrichum cordifolium (Heart-leaved aster).